The chain runs to 580 residues: NADH-quinone oxidoreductase subunit C/D (580 aa).

Positions 1–171 are NADH dehydrogenase I subunit C; it reads MSLDQAIPEA…PPFVLTDRLF (171 aa). Residues 195–580 are NADH dehydrogenase I subunit D; sequence ELMVLNFGPH…IDFVMSDVDR (386 aa).

It in the N-terminal section; belongs to the complex I 30 kDa subunit family. This sequence in the C-terminal section; belongs to the complex I 49 kDa subunit family. In terms of assembly, NDH-1 is composed of 13 different subunits. Subunits NuoB, CD, E, F, and G constitute the peripheral sector of the complex.

The protein resides in the cell inner membrane. The catalysed reaction is a quinone + NADH + 5 H(+)(in) = a quinol + NAD(+) + 4 H(+)(out). Functionally, NDH-1 shuttles electrons from NADH, via FMN and iron-sulfur (Fe-S) centers, to quinones in the respiratory chain. The immediate electron acceptor for the enzyme in this species is believed to be ubiquinone. Couples the redox reaction to proton translocation (for every two electrons transferred, four hydrogen ions are translocated across the cytoplasmic membrane), and thus conserves the redox energy in a proton gradient. The chain is NADH-quinone oxidoreductase subunit C/D from Cereibacter sphaeroides (strain ATCC 17029 / ATH 2.4.9) (Rhodobacter sphaeroides).